Reading from the N-terminus, the 184-residue chain is FMRFamide-related peptides (184 aa).

The propeptide occupies 1–44 (MLVSSSVLKDDSSLRIFKESPNEFEYIIKRHDMDDRKEDTESKE). Phe-56 is modified (phenylalanine amide). Residues 59-83 (GQSFFNNLDNSAFDNEIDSKVSRHP) constitute a propeptide that is removed on maturation. Residue Phe-94 is modified to Phenylalanine amide. Positions 97–107 (SGMKSTNDEQP) are excised as a propeptide. Position 119 is a phenylalanine amide (Phe-119). Residues 122 to 184 (NIQIVPTDFD…SLETNSNHRE (63 aa)) constitute a propeptide that is removed on maturation.

It belongs to the FARP (FMRFamide related peptide) family. As to expression, expressed throughout the central nervous system.

It is found in the secreted. Functionally, in insects, FMRFamide and related peptides have modulatory actions at skeletal neuromuscular junctions, and peptides that are immunologically related to FMRFamide are released into the circulation from neurohemal organs. This chain is FMRFamide-related peptides, found in Camponotus floridanus (Florida carpenter ant).